Here is a 570-residue protein sequence, read N- to C-terminus: MDRSKRNSIAGFPPRVERLEEFEGGGGGDGNTVQVGRVSSSSYRAIISAFSRLTSLDDFTREKIGSGFFSEVFKVRHRASGQVMALKMNTLSSNRANLLKEMQLMNRLSHPNILRFMGVCVHQGQLHALTEYINSGNLEQLLDSDLYLPWTVRVKLAYDIAVGLSYLHFKGIFHRDLTSKNCLIKRDENGYSAVVADFGLAEKIPDASIGREKLAVVGSPFWMAPEVLRDEPYNEKADVFSYGIILCEIIARIQADPDYLPRTENFGLDYDAFQNMVGDCPSDFLQLTFNCCNMDPKLRPSFEEIGKTLKEIMSRLPEEELERDRKLQPTAKGPLEKVPGGKRLSSLDDKIPHKSPRPRRTIWLSRSQSDIFSHKPPRTVSVLDPYYQPRDGATHTPKVNPFSARQDLKGGKVKFFDLPSKSVISLVFDLDAPGPGSTTLADCQEPLAMSSRRWRSLPGSPEFLHQACPFMGCEESLSDGPPPRLSSLKYGVREIPPFRTSALSAASGHEAMDCSNPQEENGFGPRLKGTSLCTGAASEEMEVEEERPRRASVYFSISGISLQTQAKQDG.

Positions 58-313 (DFTREKIGSG…EIGKTLKEIM (256 aa)) constitute a Protein kinase domain. Residues 64–72 (IGSGFFSEV) and Lys-87 each bind ATP. Catalysis depends on Asp-176, which acts as the Proton acceptor. The residue at position 219 (Ser-219) is a Phosphoserine; by autocatalysis. Basic and acidic residues predominate over residues 316-327 (LPEEELERDRKL). A disordered region spans residues 316-357 (LPEEELERDRKLQPTAKGPLEKVPGGKRLSSLDDKIPHKSPR). Ser-369, Ser-456, and Ser-460 each carry phosphoserine. The interval 511-530 (AMDCSNPQEENGFGPRLKGT) is disordered.

This sequence belongs to the protein kinase superfamily. TKL Ser/Thr protein kinase family. It depends on Mg(2+) as a cofactor. Mn(2+) serves as cofactor.

Its subcellular location is the nucleus. It catalyses the reaction L-seryl-[protein] + ATP = O-phospho-L-seryl-[protein] + ADP + H(+). The enzyme catalyses L-threonyl-[protein] + ATP = O-phospho-L-threonyl-[protein] + ADP + H(+). It carries out the reaction L-tyrosyl-[protein] + ATP = O-phospho-L-tyrosyl-[protein] + ADP + H(+). Activated by autophosphorylation on Ser-219. Functionally, dual specificity protein kinase activity catalyzing autophosphorylation and phosphorylation of exogenous substrates on both serine/threonine and tyrosine residues. Phosphorylates cofilin at 'Ser-3'. May play an important role in spermatogenesis. The chain is Dual specificity testis-specific protein kinase 2 (Tesk2) from Mus musculus (Mouse).